The chain runs to 542 residues: GMP synthase [glutamine-hydrolyzing] (542 aa).

The region spanning 28–218 (MIVILDFGSQ…VYHICECEPT (191 aa)) is the Glutamine amidotransferase type-1 domain. The Nucleophile role is filled by Cys-105. Residues His-192 and Glu-194 contribute to the active site. Residues 219–417 (WTTEAFVEEA…IGLPEEIVRR (199 aa)) form the GMPS ATP-PPase domain. ATP is bound at residue 246-252 (SGGVDSS).

As to quaternary structure, homodimer.

The enzyme catalyses XMP + L-glutamine + ATP + H2O = GMP + L-glutamate + AMP + diphosphate + 2 H(+). It functions in the pathway purine metabolism; GMP biosynthesis; GMP from XMP (L-Gln route): step 1/1. Its function is as follows. Catalyzes the synthesis of GMP from XMP. This chain is GMP synthase [glutamine-hydrolyzing], found in Gloeothece citriformis (strain PCC 7424) (Cyanothece sp. (strain PCC 7424)).